A 289-amino-acid chain; its full sequence is uncharacterized protein (289 aa).

The first 19 residues, 1 to 19 (MAKWLGAPLARGVSTATRA), serve as a signal peptide directing secretion. 2 consecutive transmembrane segments (helical) span residues 90-110 (GLLA…GWGV) and 257-277 (AALS…LVFA).

The protein resides in the cell membrane. This is an uncharacterized protein from Mycobacterium tuberculosis (strain CDC 1551 / Oshkosh).